The sequence spans 343 residues: Tribbles homolog 2 (343 aa).

The disordered stretch occupies residues 25–50 (EELSSIRSAEPSQSFSPNLGSPSPPE). A compositionally biased stretch (polar residues) spans 29–45 (SIRSAEPSQSFSPNLGS). A Protein kinase domain is found at 61 to 308 (IGKYLLLEPL…SQEILDHPWF (248 aa)).

Belongs to the protein kinase superfamily. CAMK Ser/Thr protein kinase family. Tribbles subfamily.

The protein localises to the cytoplasm. Its subcellular location is the cytoskeleton. Interacts with MAPK kinases and regulates activation of MAP kinases. Does not display kinase activity. The chain is Tribbles homolog 2 from Mus musculus (Mouse).